Here is a 234-residue protein sequence, read N- to C-terminus: Uridylate kinase (234 aa).

Residue 9-12 coordinates ATP; that stretch reads KLSG. UMP is bound at residue glycine 51. Residues glycine 52 and arginine 56 each contribute to the ATP site. Residues aspartate 71 and 132–139 contribute to the UMP site; that span reads CGNPFFTT. ATP-binding residues include threonine 159, tyrosine 165, and aspartate 168.

The protein belongs to the UMP kinase family. In terms of assembly, homohexamer.

Its subcellular location is the cytoplasm. It carries out the reaction UMP + ATP = UDP + ADP. Its pathway is pyrimidine metabolism; CTP biosynthesis via de novo pathway; UDP from UMP (UMPK route): step 1/1. With respect to regulation, inhibited by UTP. Its function is as follows. Catalyzes the reversible phosphorylation of UMP to UDP. This Prochlorococcus marinus (strain AS9601) protein is Uridylate kinase.